The sequence spans 210 residues: Na(+)-translocating NADH-quinone reductase subunit D (210 aa).

6 consecutive transmembrane segments (helical) span residues 14 to 34 (PIVNNNPIALQVLGVCSALAV), 42 to 62 (LVMALALTAVTAFSNLFISMI), 72 to 92 (IIVQMTIIASLVIVVDQLLQA), 103 to 123 (VFVGLIITNCIVMGRAEAYAM), 131 to 151 (FMDGIGNGLGYGAILLAVGFV), and 178 to 198 (NGLLLLPPSAFFLIGILIWII).

The protein belongs to the NqrDE/RnfAE family. As to quaternary structure, composed of six subunits; NqrA, NqrB, NqrC, NqrD, NqrE and NqrF.

Its subcellular location is the cell inner membrane. It carries out the reaction a ubiquinone + n Na(+)(in) + NADH + H(+) = a ubiquinol + n Na(+)(out) + NAD(+). In terms of biological role, NQR complex catalyzes the reduction of ubiquinone-1 to ubiquinol by two successive reactions, coupled with the transport of Na(+) ions from the cytoplasm to the periplasm. NqrA to NqrE are probably involved in the second step, the conversion of ubisemiquinone to ubiquinol. This is Na(+)-translocating NADH-quinone reductase subunit D from Shewanella sp. (strain ANA-3).